Reading from the N-terminus, the 327-residue chain is Quinone oxidoreductase (327 aa).

Belongs to the zinc-containing alcohol dehydrogenase family. Quinone oxidoreductase subfamily. As to quaternary structure, homodimer.

It carries out the reaction 2 a quinone + NADPH + H(+) = 2 a 1,4-benzosemiquinone + NADP(+). The chain is Quinone oxidoreductase (qor) from Salmonella typhimurium (strain LT2 / SGSC1412 / ATCC 700720).